The sequence spans 622 residues: Putative DEAD-box ATP-dependent RNA helicase 44 (622 aa).

Residues D50 to E97 form a disordered region. Residues D66–E97 are compositionally biased toward basic and acidic residues. Residues I241–V436 form the Helicase ATP-binding domain. S254–T261 is a binding site for ATP. The DEAD box signature appears at D367–D370. The region spanning R460–E606 is the Helicase C-terminal domain.

Belongs to the DEAD box helicase family. DDX23/PRP28 subfamily.

It catalyses the reaction ATP + H2O = ADP + phosphate + H(+). This is Putative DEAD-box ATP-dependent RNA helicase 44 (RH44) from Arabidopsis thaliana (Mouse-ear cress).